The sequence spans 273 residues: Putative pyruvate, phosphate dikinase regulatory protein (273 aa).

153–160 contacts ADP; it reads GVSRTSKT.

It belongs to the pyruvate, phosphate/water dikinase regulatory protein family. PDRP subfamily.

The catalysed reaction is N(tele)-phospho-L-histidyl/L-threonyl-[pyruvate, phosphate dikinase] + ADP = N(tele)-phospho-L-histidyl/O-phospho-L-threonyl-[pyruvate, phosphate dikinase] + AMP + H(+). The enzyme catalyses N(tele)-phospho-L-histidyl/O-phospho-L-threonyl-[pyruvate, phosphate dikinase] + phosphate + H(+) = N(tele)-phospho-L-histidyl/L-threonyl-[pyruvate, phosphate dikinase] + diphosphate. Bifunctional serine/threonine kinase and phosphorylase involved in the regulation of the pyruvate, phosphate dikinase (PPDK) by catalyzing its phosphorylation/dephosphorylation. This Sinorhizobium fredii (strain NBRC 101917 / NGR234) protein is Putative pyruvate, phosphate dikinase regulatory protein.